The sequence spans 239 residues: Phosphoglycolate phosphatase (239 aa).

Aspartate 9 acts as the Nucleophile in catalysis. Mg(2+)-binding residues include aspartate 9 and aspartate 11. Lysine 157 contributes to the substrate binding site. Aspartate 180 and aspartate 184 together coordinate Mg(2+).

Belongs to the archaeal SPP-like hydrolase family. Mg(2+) is required as a cofactor.

The enzyme catalyses 2-phosphoglycolate + H2O = glycolate + phosphate. Functionally, catalyzes the dephosphorylation of 2-phosphoglycolate. This Thermococcus kodakarensis (strain ATCC BAA-918 / JCM 12380 / KOD1) (Pyrococcus kodakaraensis (strain KOD1)) protein is Phosphoglycolate phosphatase.